Reading from the N-terminus, the 76-residue chain is UPF0291 protein BPUM_1689 (76 aa).

2 disordered regions span residues 1–31 and 56–76; these read MISK…TEQK and DPEG…QNLH. Composition is skewed to basic and acidic residues over residues 12 to 31 and 63 to 76; these read ELSK…TEQK and TPEK…QNLH.

It belongs to the UPF0291 family.

Its subcellular location is the cytoplasm. The sequence is that of UPF0291 protein BPUM_1689 from Bacillus pumilus (strain SAFR-032).